The chain runs to 620 residues: Glutathione-regulated potassium-efflux system protein KefC (620 aa).

The next 12 membrane-spanning stretches (helical) occupy residues His4 to Val24, Leu26 to Leu46, Ser54 to Leu74, Gly90 to Leu110, Val114 to Met134, Phe149 to Leu169, Met178 to Leu198, Val218 to Gly238, Gly270 to Leu290, Leu294 to Ile314, Trp327 to Gln347, and Ser359 to Asn379. The 120-residue stretch at Gln399–Thr518 folds into the RCK N-terminal domain. Residues Gly597–Ser620 form a disordered region.

The protein belongs to the monovalent cation:proton antiporter 2 (CPA2) transporter (TC 2.A.37) family. KefC subfamily. As to quaternary structure, homodimer. Interacts with the regulatory subunit KefF.

It localises to the cell inner membrane. Pore-forming subunit of a potassium efflux system that confers protection against electrophiles. Catalyzes K(+)/H(+) antiport. The polypeptide is Glutathione-regulated potassium-efflux system protein KefC (Escherichia fergusonii (strain ATCC 35469 / DSM 13698 / CCUG 18766 / IAM 14443 / JCM 21226 / LMG 7866 / NBRC 102419 / NCTC 12128 / CDC 0568-73)).